A 156-amino-acid chain; its full sequence is Small ribosomal subunit protein uS7 (156 aa).

Belongs to the universal ribosomal protein uS7 family. Part of the 30S ribosomal subunit. Contacts proteins S9 and S11.

One of the primary rRNA binding proteins, it binds directly to 16S rRNA where it nucleates assembly of the head domain of the 30S subunit. Is located at the subunit interface close to the decoding center, probably blocks exit of the E-site tRNA. The chain is Small ribosomal subunit protein uS7 from Nitratidesulfovibrio vulgaris (strain ATCC 29579 / DSM 644 / CCUG 34227 / NCIMB 8303 / VKM B-1760 / Hildenborough) (Desulfovibrio vulgaris).